Reading from the N-terminus, the 309-residue chain is Tagatose-6-phosphate kinase (309 aa).

Belongs to the carbohydrate kinase PfkB family. LacC subfamily.

The catalysed reaction is D-tagatofuranose 6-phosphate + ATP = D-tagatofuranose 1,6-bisphosphate + ADP + H(+). Its pathway is carbohydrate metabolism; D-tagatose 6-phosphate degradation; D-glyceraldehyde 3-phosphate and glycerone phosphate from D-tagatose 6-phosphate: step 1/2. This is Tagatose-6-phosphate kinase from Streptococcus pneumoniae (strain Taiwan19F-14).